The sequence spans 575 residues: Hemagglutinin-neuraminidase (575 aa).

Residues 1-10 (MDGDRGKRDS) show a composition bias toward basic and acidic residues. Residues 1 to 24 (MDGDRGKRDSYWSTSPSGSTTKLA) are disordered. Residues 1 to 37 (MDGDRGKRDSYWSTSPSGSTTKLASGWERSSKVDTWL) lie on the Intravirion side of the membrane. The incorporation in virion stretch occupies residues 10–14 (SYWST). A compositionally biased stretch (polar residues) spans 11–23 (YWSTSPSGSTTKL). The helical transmembrane segment at 38–58 (LILSFTQWALSIATVIICIII) threads the bilayer. The tract at residues 59 to 140 (SARQGYSMKE…RQELTQLCES (82 aa)) is involved in interaction with F protein. Topologically, residues 59-575 (SARQGYSMKE…SIPKLCKAES (517 aa)) are virion surface. Residue Asn-77 is glycosylated (N-linked (GlcNAc...) asparagine; by host). Disulfide bonds link Cys-192–Cys-216, Cys-258–Cys-271, Cys-357–Cys-469, and Cys-463–Cys-473. Positions 254-259 (NRKSCS) are involved in neuraminidase activity. N-linked (GlcNAc...) asparagine; by host glycans are attached at residues Asn-499 and Asn-511. Cys-535 and Cys-544 form a disulfide bridge.

It belongs to the paramyxoviruses hemagglutinin-neuraminidase family. Homotetramer; composed of disulfide-linked homodimers. Interacts with F protein trimer. Post-translationally, N-glycosylated; glycans consist of a mixture of high mannose-type oligosaccharides and of complex-type oligosaccharides.

The protein resides in the virion membrane. It localises to the host cell membrane. It carries out the reaction Hydrolysis of alpha-(2-&gt;3)-, alpha-(2-&gt;6)-, alpha-(2-&gt;8)- glycosidic linkages of terminal sialic acid residues in oligosaccharides, glycoproteins, glycolipids, colominic acid and synthetic substrates.. Functionally, attaches the virus to sialic acid-containing cell receptors and thereby initiating infection. Binding of HN protein to the receptor induces a conformational change that allows the F protein to trigger virion/cell membranes fusion. In terms of biological role, neuraminidase activity ensures the efficient spread of the virus by dissociating the mature virions from the neuraminic acid containing glycoproteins. In Sendai virus (strain Fushimi) (SeV), this protein is Hemagglutinin-neuraminidase (HN).